The primary structure comprises 214 residues: RNA pyrophosphohydrolase (214 aa).

Residues 6-149 form the Nudix hydrolase domain; sequence GFRPNVGIIL…KRDVYQLALT (144 aa). The Nudix box signature appears at 38–59; the sequence is GGIKYGETPMQAMYRELHEETG.

Belongs to the Nudix hydrolase family. RppH subfamily. It depends on a divalent metal cation as a cofactor.

Accelerates the degradation of transcripts by removing pyrophosphate from the 5'-end of triphosphorylated RNA, leading to a more labile monophosphorylated state that can stimulate subsequent ribonuclease cleavage. In Burkholderia cenocepacia (strain HI2424), this protein is RNA pyrophosphohydrolase.